Reading from the N-terminus, the 211-residue chain is Phosphoserine phosphatase (211 aa).

Residue Asp-11 is the Nucleophile of the active site. Mg(2+) is bound by residues Asp-11 and Asp-13. Asp-13 serves as the catalytic Proton donor. Residues Glu-20, Arg-56, 99-100 (SG), and Lys-144 contribute to the substrate site. Position 167 (Asp-167) interacts with Mg(2+). Asn-170 is a binding site for substrate.

Belongs to the HAD-like hydrolase superfamily. SerB family. Mg(2+) serves as cofactor.

The enzyme catalyses O-phospho-L-serine + H2O = L-serine + phosphate. It catalyses the reaction O-phospho-D-serine + H2O = D-serine + phosphate. The protein operates within amino-acid biosynthesis; L-serine biosynthesis; L-serine from 3-phospho-D-glycerate: step 3/3. In Methanocaldococcus jannaschii (strain ATCC 43067 / DSM 2661 / JAL-1 / JCM 10045 / NBRC 100440) (Methanococcus jannaschii), this protein is Phosphoserine phosphatase.